Consider the following 439-residue polypeptide: Leukocyte immunoglobulin-like receptor subfamily A member 3 (439 aa).

A signal peptide spans 1–23 (MTPILTVLICLGLSLDPRTHVQA). Ig-like C2-type domains follow at residues 27–108 (PKPT…AGLS), 119–224 (TGAY…GVSK), 226–315 (PSLS…DPLD), and 326–415 (PFLS…SDPL). Cysteines 49 and 98 form a disulfide. Asn140 carries N-linked (GlcNAc...) asparagine glycosylation. Disulfide bonds link Cys145–Cys197, Cys157–Cys167, and Cys246–Cys297. N-linked (GlcNAc...) asparagine glycosylation is found at Asn281, Asn302, and Asn341. Cys346 and Cys397 are joined by a disulfide. N-linked (GlcNAc...) asparagine glycosylation is present at Asn431.

In terms of processing, N-glycosylation is required for ligand binding. Detected in B-cells, and at lower levels in natural killer (NK) cells. Detected in peripheral blood monocytes and lung.

It localises to the secreted. Its function is as follows. Acts as a soluble receptor for class I MHC antigens. Binds both classical and non-classical HLA class I molecules but with reduced affinities compared to LILRB1 or LILRB2. Binds with high affinity to the surface of monocytes, leading to abolish LPS-induced TNF-alpha production by monocytes. This is Leukocyte immunoglobulin-like receptor subfamily A member 3 (LILRA3) from Homo sapiens (Human).